A 156-amino-acid chain; its full sequence is Ribonuclease H (156 aa).

The RNase H type-1 domain occupies 1–142; the sequence is MGKQVEIFTD…CDELARAAAN (142 aa). Mg(2+)-binding residues include Asp-10, Glu-48, Asp-70, and Asp-134.

This sequence belongs to the RNase H family. In terms of assembly, monomer. The cofactor is Mg(2+).

Its subcellular location is the cytoplasm. The enzyme catalyses Endonucleolytic cleavage to 5'-phosphomonoester.. Functionally, endonuclease that specifically degrades the RNA of RNA-DNA hybrids. This Photorhabdus laumondii subsp. laumondii (strain DSM 15139 / CIP 105565 / TT01) (Photorhabdus luminescens subsp. laumondii) protein is Ribonuclease H.